Consider the following 325-residue polypeptide: Ribosomal RNA small subunit methyltransferase H (325 aa).

Residues 39–41 (GGH), Asp59, Phe90, Asp108, and Gln115 contribute to the S-adenosyl-L-methionine site.

It belongs to the methyltransferase superfamily. RsmH family.

It is found in the cytoplasm. The catalysed reaction is cytidine(1402) in 16S rRNA + S-adenosyl-L-methionine = N(4)-methylcytidine(1402) in 16S rRNA + S-adenosyl-L-homocysteine + H(+). Its function is as follows. Specifically methylates the N4 position of cytidine in position 1402 (C1402) of 16S rRNA. The chain is Ribosomal RNA small subunit methyltransferase H from Leptothrix cholodnii (strain ATCC 51168 / LMG 8142 / SP-6) (Leptothrix discophora (strain SP-6)).